The primary structure comprises 319 residues: MRSSRILGIGSYLPKSLVTNDDLACTVATSDEWIVKRTGIRQRYIAADDQMTSDMAVEAAKLALNDSGINKQDVDLIVVATTTPDRTFPSCATIVQSKLECKNAFAFDIQAVCSGFIYAMAIADNFIKSGQVNVSLVIGAEVMSRILDWKDRSTCVLFGDGAGAVVLSNNSARNTGVISTILYSDGTLHNLLYTSGGTAYNGVAGTICMNGTVVFEHAIEKLSASIVEILNKNNLSIDEVNWFVLHQANIRIIELVARRLKIPSEKMVISINQHANTSAASIPLALSYAKNSGKLKQDDLVVLAAIGAGITWGVCLVRM.

Residues Cys-113 and His-246 contribute to the active site. Positions 247–251 (QANIR) are ACP-binding. Asn-276 is an active-site residue.

Belongs to the thiolase-like superfamily. FabH family. As to quaternary structure, homodimer.

It is found in the cytoplasm. The catalysed reaction is malonyl-[ACP] + acetyl-CoA + H(+) = 3-oxobutanoyl-[ACP] + CO2 + CoA. The protein operates within lipid metabolism; fatty acid biosynthesis. Functionally, catalyzes the condensation reaction of fatty acid synthesis by the addition to an acyl acceptor of two carbons from malonyl-ACP. Catalyzes the first condensation reaction which initiates fatty acid synthesis and may therefore play a role in governing the total rate of fatty acid production. Possesses both acetoacetyl-ACP synthase and acetyl transacylase activities. Its substrate specificity determines the biosynthesis of branched-chain and/or straight-chain of fatty acids. In Ehrlichia ruminantium (strain Welgevonden), this protein is Beta-ketoacyl-[acyl-carrier-protein] synthase III.